A 474-amino-acid polypeptide reads, in one-letter code: Bifunctional protein HldE (474 aa).

The tract at residues 1–318 (MKMTLPDFHC…ENAIRGRAET (318 aa)) is ribokinase. 195 to 198 (NLSE) is a binding site for ATP. Asp-264 is an active-site residue. A cytidylyltransferase region spans residues 344–474 (MTNGCFDILH…TNIIKAIKNQ (131 aa)).

It in the N-terminal section; belongs to the carbohydrate kinase PfkB family. In the C-terminal section; belongs to the cytidylyltransferase family. As to quaternary structure, homodimer.

It catalyses the reaction D-glycero-beta-D-manno-heptose 7-phosphate + ATP = D-glycero-beta-D-manno-heptose 1,7-bisphosphate + ADP + H(+). The enzyme catalyses D-glycero-beta-D-manno-heptose 1-phosphate + ATP + H(+) = ADP-D-glycero-beta-D-manno-heptose + diphosphate. Its pathway is nucleotide-sugar biosynthesis; ADP-L-glycero-beta-D-manno-heptose biosynthesis; ADP-L-glycero-beta-D-manno-heptose from D-glycero-beta-D-manno-heptose 7-phosphate: step 1/4. It functions in the pathway nucleotide-sugar biosynthesis; ADP-L-glycero-beta-D-manno-heptose biosynthesis; ADP-L-glycero-beta-D-manno-heptose from D-glycero-beta-D-manno-heptose 7-phosphate: step 3/4. The protein operates within bacterial outer membrane biogenesis; LPS core biosynthesis. Functionally, catalyzes the phosphorylation of D-glycero-D-manno-heptose 7-phosphate at the C-1 position to selectively form D-glycero-beta-D-manno-heptose-1,7-bisphosphate. Catalyzes the ADP transfer from ATP to D-glycero-beta-D-manno-heptose 1-phosphate, yielding ADP-D-glycero-beta-D-manno-heptose. This is Bifunctional protein HldE from Photorhabdus laumondii subsp. laumondii (strain DSM 15139 / CIP 105565 / TT01) (Photorhabdus luminescens subsp. laumondii).